The sequence spans 236 residues: Penton protein H240R (236 aa).

The protein belongs to the asfivirus H240R family.

Its subcellular location is the virion. In terms of biological role, forms the penton at the fivefold vertices of the icosahedral capsid. Together with the minor capsid proteins (p17, p49, and M1249L), forms a complicated network immediately below the outer capsid shell, stabilizing the whole capsid. In African swine fever virus (isolate Warthog/Namibia/Wart80/1980) (ASFV), this protein is Penton protein H240R.